Consider the following 514-residue polypeptide: ATP synthase subunit alpha (514 aa).

170 to 177 (GDRQIGKT) provides a ligand contact to ATP.

Belongs to the ATPase alpha/beta chains family. As to quaternary structure, F-type ATPases have 2 components, CF(1) - the catalytic core - and CF(0) - the membrane proton channel. CF(1) has five subunits: alpha(3), beta(3), gamma(1), delta(1), epsilon(1). CF(0) has three main subunits: a(1), b(2) and c(9-12). The alpha and beta chains form an alternating ring which encloses part of the gamma chain. CF(1) is attached to CF(0) by a central stalk formed by the gamma and epsilon chains, while a peripheral stalk is formed by the delta and b chains.

The protein resides in the cell inner membrane. It catalyses the reaction ATP + H2O + 4 H(+)(in) = ADP + phosphate + 5 H(+)(out). In terms of biological role, produces ATP from ADP in the presence of a proton gradient across the membrane. The alpha chain is a regulatory subunit. This is ATP synthase subunit alpha from Pseudomonas putida (strain ATCC 700007 / DSM 6899 / JCM 31910 / BCRC 17059 / LMG 24140 / F1).